An 873-amino-acid chain; its full sequence is E3 ubiquitin-protein ligase UPL5 (873 aa).

The span at 1-19 shows a compositional bias: polar residues; that stretch reads MTLSRSSADDSTNNANRSY. Disordered stretches follow at residues 1–37 and 70–90; these read MTLSRSSADDSTNNANRSYSAVAGTDNKRKRDEDSSD and RSGENSRSLSSSGECSSSNRP. The Ubiquitin-like domain occupies 95–171; the sequence is LQIFVRMMSG…LQLVARMQST (77 aa). Positions 272 to 296 constitute a C-type lectin domain; sequence CLPIVLEFCKLLRKVCPDQKLYVTC. The HECT domain maps to 532–873; it reads SPEALHGGLF…DHVSSSFGKW (342 aa). Catalysis depends on C839, which acts as the Glycyl thioester intermediate.

The protein belongs to the UPL family. Interacts with WRKY53.

Its subcellular location is the cytoplasm. It catalyses the reaction S-ubiquitinyl-[E2 ubiquitin-conjugating enzyme]-L-cysteine + [acceptor protein]-L-lysine = [E2 ubiquitin-conjugating enzyme]-L-cysteine + N(6)-ubiquitinyl-[acceptor protein]-L-lysine.. Its pathway is protein modification; protein ubiquitination. In terms of biological role, E3 ubiquitin protein ligase that regulates leaf senescence through ubiquitination and subsequent degradation of WRKY53. This chain is E3 ubiquitin-protein ligase UPL5 (UPL5), found in Arabidopsis thaliana (Mouse-ear cress).